The sequence spans 402 residues: Acetylornithine aminotransferase (402 aa).

Pyridoxal 5'-phosphate-binding positions include 117-118 (GA) and Phe143. A N(2)-acetyl-L-ornithine-binding site is contributed by Arg146. Residue 231 to 234 (DEVQ) coordinates pyridoxal 5'-phosphate. Lys260 is modified (N6-(pyridoxal phosphate)lysine). Thr288 is a N(2)-acetyl-L-ornithine binding site. Pyridoxal 5'-phosphate is bound at residue Thr289.

Belongs to the class-III pyridoxal-phosphate-dependent aminotransferase family. ArgD subfamily. As to quaternary structure, homodimer. It depends on pyridoxal 5'-phosphate as a cofactor.

The protein resides in the cytoplasm. It catalyses the reaction N(2)-acetyl-L-ornithine + 2-oxoglutarate = N-acetyl-L-glutamate 5-semialdehyde + L-glutamate. The protein operates within amino-acid biosynthesis; L-arginine biosynthesis; N(2)-acetyl-L-ornithine from L-glutamate: step 4/4. This chain is Acetylornithine aminotransferase, found in Corynebacterium efficiens (strain DSM 44549 / YS-314 / AJ 12310 / JCM 11189 / NBRC 100395).